The sequence spans 372 residues: Aryl-hydrocarbon-interacting protein-like 1 (372 aa).

In terms of domain architecture, PPIase FKBP-type spans 53 to 145; it reads REVGQPMHII…DLDELQKEPQ (93 aa). TPR repeat units follow at residues 178-211, 230-263, and 264-297; these read VPVL…LRNL, NTLI…HPGI, and VKAY…EPSM. The segment at 325–372 is disordered; that stretch reads NMLSQGATWSPAEPPAEPPAESSTEPPAEPPAEPPAELTLTPGHPLQH.

As to quaternary structure, interacts with NUB1.

Its subcellular location is the cytoplasm. The protein resides in the nucleus. In terms of biological role, may be important in protein trafficking and/or protein folding and stabilization. The polypeptide is Aryl-hydrocarbon-interacting protein-like 1 (AIPL1) (Saimiri boliviensis boliviensis (Bolivian squirrel monkey)).